The sequence spans 870 residues: MQLITNFSSSSSELQFLVDKVKRESLSSSSSNTQNLFLSTSPYDTAWLALIPHPHHHHHHGRPMFEKCLQWILHNQTPQGFWAAAGDNISDTDDDVTLDCLLSTLACLVALKRWQLAPDMIHKGLEFVNRNTERLVMKQKPSDVPRWFTIMFPAMLELAGASSLRVDFSENLNRILVELSQNRDDILTREEVDEKKQYSPLLLFLEALPAQSYDNDVLKQIIDKNLSNDGSLLQSPSATARAYMITGNTRCLSYLHSLTNSCSNGGVPSFYPVDDDLHDLVMVNQLTRSGLTEHLIPEIDHLLLKVQKNYKYKKASPKSLYSIAAELYRDSLAFWLLRVNNHWVSPSIFCWFLDDDEIRDHIETNYEEFAAVLLNVYRATDLMFSGEVQLVEARSFATKNLEKILATGNIHKTNADISSSLHKMIEHELRVPWTARMDHVENRIWIEEIASSALWFGKSSYLRLSCFHKMSLQQLAVKNYTLRQLVYRDELAEVERWSKERGLCDMGFCREKTGYCYYAFAASTCLPWSSDVRLVLTKAAVVITVADDFFDVEGSMVDLEKLTDAVRRWDAEGLGSHSKTIFEALDDLVNEVRLKCFQQNGQDIKNNLQQLWYETFHSWLMEAKWGKGLTSKPSVDVYLGNAMTSIAAHTMVLTASCLLGPGFPVHQLWSQRRHQDITSLLMVLTRLLNDIQSYLKEEDEGKINYVWMYMIENNQASIDDSVRHVQTIINVKKQEFIQRVLSDQHCNLPKSFKQLHFSCLKVFNMFFNSSNIFDTDTDLLLDIHEAFVSPPQVPKFKPHIKPPHQLPATLQPPHQPQQIMVNKKKVEMVYKSYHHPFKVFTLQKKQSSGHGTMNPRASILAGPNIKLCFS.

Mg(2+)-binding residues include Asp-547, Asp-551, Asn-689, Ser-693, and Glu-697. The DDXXD motif signature appears at 547-551 (DDFFD).

This sequence belongs to the terpene synthase family. Requires Mg(2+) as cofactor. The cofactor is Mn(2+). In terms of tissue distribution, highly expressed in cells of the transmitting tract of the stigma and style and in the epidermal cells of petals, as well as in stamens.

It catalyses the reaction (2E)-geranyl diphosphate + H2O = (S)-linalool + diphosphate. In terms of biological role, involved in the biosynthesis of the acyclic monoterpene S-linalool, a major component of the strong sweet scent of the C.breweri flowers. This Clarkia breweri (Fairy fans) protein is S-linalool synthase (LIS).